The chain runs to 557 residues: 2-succinyl-5-enolpyruvyl-6-hydroxy-3-cyclohexene-1-carboxylate synthase (557 aa).

A disordered region spans residues 183–206 (YGGTEHPPVAPPLPPRRAPRAAAP).

The protein belongs to the TPP enzyme family. MenD subfamily. Homodimer. Mg(2+) serves as cofactor. It depends on Mn(2+) as a cofactor. The cofactor is thiamine diphosphate.

The catalysed reaction is isochorismate + 2-oxoglutarate + H(+) = 5-enolpyruvoyl-6-hydroxy-2-succinyl-cyclohex-3-ene-1-carboxylate + CO2. Its pathway is quinol/quinone metabolism; 1,4-dihydroxy-2-naphthoate biosynthesis; 1,4-dihydroxy-2-naphthoate from chorismate: step 2/7. It participates in quinol/quinone metabolism; menaquinone biosynthesis. Functionally, catalyzes the thiamine diphosphate-dependent decarboxylation of 2-oxoglutarate and the subsequent addition of the resulting succinic semialdehyde-thiamine pyrophosphate anion to isochorismate to yield 2-succinyl-5-enolpyruvyl-6-hydroxy-3-cyclohexene-1-carboxylate (SEPHCHC). The sequence is that of 2-succinyl-5-enolpyruvyl-6-hydroxy-3-cyclohexene-1-carboxylate synthase from Halorhodospira halophila (strain DSM 244 / SL1) (Ectothiorhodospira halophila (strain DSM 244 / SL1)).